The following is a 102-amino-acid chain: Plastocyanin (102 aa).

The Plastocyanin-like domain maps to 1–102 (AKVEVGDEVG…ANMKGTLTVK (102 aa)). Cu cation contacts are provided by histidine 37, cysteine 87, histidine 90, and methionine 95.

Belongs to the plastocyanin family. It depends on Cu(2+) as a cofactor.

The protein resides in the plastid. Its subcellular location is the chloroplast thylakoid membrane. Participates in electron transfer between P700 and the cytochrome b6-f complex in photosystem I. The protein is Plastocyanin (PETE) of Dryopteris crassirhizoma (Thick stemmed wood fern).